The sequence spans 615 residues: Zinc finger protein 653 (615 aa).

Disordered regions lie at residues 1-48, 95-117, 176-236, and 401-432; these read MAER…ARRR, RSGR…KRRR, PLSD…SSGL, and EEKE…ELDG. Residues 107–118 carry the Nuclear localization signal motif; it reads PKKPKRKKRRRR. Residues 108–117 show a composition bias toward basic residues; the sequence is KKPKRKKRRR. The span at 193 to 205 shows a compositional bias: low complexity; the sequence is AGSSDSSSSGSAS. Polar residues predominate over residues 226 to 236; it reads TPTSPVGSSGL. The segment covering 419–432 has biased composition (acidic residues); sequence AEPEAEADGEELDG. A Nuclear localization signal motif is present at residues 445–451; that stretch reads EPEKRRR. C2H2-type zinc fingers lie at residues 467-492, 498-522, 528-550, 556-578, and 586-609; these read FHCP…NLVH, KVCP…MIIH, FTCE…RRTH, LQCE…MKKH, and FTCD…LKSH.

It belongs to the krueppel C2H2-type zinc-finger protein family. Interacts with NR5A1. Highly expressed in testis, cerebellum, temporal lobe, hippocampus and the adrenal gland. Moderately expressed in spleen, uterus, thymus, pancreas, kidney, stomach and rectum.

The protein resides in the nucleus. In terms of biological role, transcriptional repressor. May repress NR5A1, PPARG, NR1H3, NR4A2, ESR1 and NR3C1 transcriptional activity. The sequence is that of Zinc finger protein 653 (ZNF653) from Homo sapiens (Human).